The sequence spans 1076 residues: Bifunctional glutamine synthetase adenylyltransferase/adenylyl-removing enzyme (1076 aa).

Residues 1-521 (MESSIFKPSS…LHLDIYYRPM (521 aa)) form an adenylyl removase region. The interval 524–1076 (VNAQMENDQI…LERNRRRAQR (553 aa)) is adenylyl transferase. Positions 1042-1056 (TATASAATQQPQTAP) are enriched in low complexity. The tract at residues 1042-1076 (TATASAATQQPQTAPRPRMHVIAPRLERNRRRAQR) is disordered.

It belongs to the GlnE family. Mg(2+) is required as a cofactor.

It catalyses the reaction [glutamine synthetase]-O(4)-(5'-adenylyl)-L-tyrosine + phosphate = [glutamine synthetase]-L-tyrosine + ADP. It carries out the reaction [glutamine synthetase]-L-tyrosine + ATP = [glutamine synthetase]-O(4)-(5'-adenylyl)-L-tyrosine + diphosphate. Its function is as follows. Involved in the regulation of glutamine synthetase GlnA, a key enzyme in the process to assimilate ammonia. When cellular nitrogen levels are high, the C-terminal adenylyl transferase (AT) inactivates GlnA by covalent transfer of an adenylyl group from ATP to specific tyrosine residue of GlnA, thus reducing its activity. Conversely, when nitrogen levels are low, the N-terminal adenylyl removase (AR) activates GlnA by removing the adenylyl group by phosphorolysis, increasing its activity. The regulatory region of GlnE binds the signal transduction protein PII (GlnB) which indicates the nitrogen status of the cell. This Bifidobacterium longum (strain DJO10A) protein is Bifunctional glutamine synthetase adenylyltransferase/adenylyl-removing enzyme.